The following is a 214-amino-acid chain: Small ribosomal subunit protein uS5 (214 aa).

The S5 DRBM domain maps to 54–117 (MKYEVIDIGM…RDAKMHVIPV (64 aa)).

This sequence belongs to the universal ribosomal protein uS5 family. In terms of assembly, part of the 30S ribosomal subunit. Contacts protein S4.

Functionally, with S4 and S12 plays an important role in translational accuracy. The sequence is that of Small ribosomal subunit protein uS5 from Metallosphaera sedula (strain ATCC 51363 / DSM 5348 / JCM 9185 / NBRC 15509 / TH2).